We begin with the raw amino-acid sequence, 282 residues long: Aquaporin PIP2-7 (282 aa).

Residues 1 to 21 (MSKEVSVEGEQPPVKDYTDPP) are disordered. Residues 1 to 38 (MSKEVSVEGEQPPVKDYTDPPPEPLLNFGELRLWSFYR) are Cytoplasmic-facing. A helical transmembrane segment spans residues 39 to 59 (ALIAEFVATLLFLYVTIATVI). The Extracellular portion of the chain corresponds to 60–71 (GHKEQNAADQCS). The helical transmembrane segment at 72-92 (GVGLLGIAWAFGGMIFILVYC) threads the bilayer. Topologically, residues 93-120 (TAGISGGHINPAVTLGLFLARKVSLIRA) are cytoplasmic. Residues 102–104 (NPA) carry the NPA 1 motif. A helical transmembrane segment spans residues 121–141 (LLYMVAQCLGAIVGVGIVKGI). At 142-162 (MKHQYNSLGGGANVVAAGYSK) the chain is on the extracellular side. A helical membrane pass occupies residues 163-183 (GTALGAEIIGTFVLVYTVFSA). Over 184–196 (TDPKRSARDSHVP) the chain is Cytoplasmic. Residues 197–217 (VLAPLPIGFAVFMVHLATIPI) traverse the membrane as a helical segment. The Extracellular portion of the chain corresponds to 218–244 (TGTGINPARSLGAAVIYNQDKPWDDHW). The NPA 2 signature appears at 223 to 225 (NPA). Residues 245-265 (ILWVGPFVGALAAAAYHQYIL) form a helical membrane-spanning segment. Residues 266 to 282 (RAAAIKALGSFRSNPSN) are Cytoplasmic-facing.

This sequence belongs to the MIP/aquaporin (TC 1.A.8) family. PIP (TC 1.A.8.11) subfamily. In terms of tissue distribution, expressed in roots, leaves and fruits.

It localises to the cell membrane. Water channel required to facilitate the transport of water across cell membrane; mercury-insensitive. Contributes to the tolerance to multiple abiotic stresses including salt (NaCl), cold and water deprivation, by modulating cytosolic K(+)/Na(+) ratio, maintaining osmotic balance, and reducing membrane injury (e.g. oxidative injury). Also regulates the expression of abscisic acid (ABA)- biosynthetic and -responsive genes during dehydration and salt stresses. In Musa acuminata (Banana), this protein is Aquaporin PIP2-7.